The sequence spans 568 residues: Sulfite reductase [NADPH] hemoprotein beta-component (568 aa).

4 residues coordinate [4Fe-4S] cluster: C426, C432, C471, and C475. A siroheme-binding site is contributed by C475.

It belongs to the nitrite and sulfite reductase 4Fe-4S domain family. In terms of assembly, alpha(8)-beta(8). The alpha component is a flavoprotein, the beta component is a hemoprotein. Requires siroheme as cofactor. The cofactor is [4Fe-4S] cluster.

The enzyme catalyses hydrogen sulfide + 3 NADP(+) + 3 H2O = sulfite + 3 NADPH + 4 H(+). It participates in sulfur metabolism; hydrogen sulfide biosynthesis; hydrogen sulfide from sulfite (NADPH route): step 1/1. Its function is as follows. Component of the sulfite reductase complex that catalyzes the 6-electron reduction of sulfite to sulfide. This is one of several activities required for the biosynthesis of L-cysteine from sulfate. The chain is Sulfite reductase [NADPH] hemoprotein beta-component from Xylella fastidiosa (strain M23).